The primary structure comprises 149 residues: Transcriptional regulator MraZ (149 aa).

SpoVT-AbrB domains are found at residues 7-54 and 83-126; these read KYVN…GISH and AVQL…QPQN.

Belongs to the MraZ family. In terms of assembly, forms oligomers.

It localises to the cytoplasm. Its subcellular location is the nucleoid. This Rickettsia rickettsii (strain Sheila Smith) protein is Transcriptional regulator MraZ.